A 139-amino-acid polypeptide reads, in one-letter code: Phosphoribosyl-AMP cyclohydrolase (139 aa).

Mg(2+) is bound at residue aspartate 91. Cysteine 92 lines the Zn(2+) pocket. Aspartate 93 and aspartate 95 together coordinate Mg(2+). 2 residues coordinate Zn(2+): cysteine 110 and cysteine 117.

This sequence belongs to the PRA-CH family. In terms of assembly, homodimer. The cofactor is Mg(2+). Requires Zn(2+) as cofactor.

The protein localises to the cytoplasm. It carries out the reaction 1-(5-phospho-beta-D-ribosyl)-5'-AMP + H2O = 1-(5-phospho-beta-D-ribosyl)-5-[(5-phospho-beta-D-ribosylamino)methylideneamino]imidazole-4-carboxamide. It participates in amino-acid biosynthesis; L-histidine biosynthesis; L-histidine from 5-phospho-alpha-D-ribose 1-diphosphate: step 3/9. Its function is as follows. Catalyzes the hydrolysis of the adenine ring of phosphoribosyl-AMP. This is Phosphoribosyl-AMP cyclohydrolase from Brucella canis (strain ATCC 23365 / NCTC 10854 / RM-666).